Here is a 1073-residue protein sequence, read N- to C-terminus: MPRRIDVRKVLMLGSGAIKIAEAAEFDYSGSQALKALREEGIETVLVNPNVATIQTSYKLADHVYLGPLQPWFVEKVIERERPDAILLGFGGQTALSLGVELHRRGILSRYGIRVLGTPIEGIEKALSRGKFRETMMKAGLPVPPSTPATSVEEALRAANEIGYPVIVRVSFNLGGGGSLVAWSREELERWLVRAFAFSGTGEVLVEKYLHYWKEIEYEVVRDQYGNMVAVACLENADPMGVHTGESVVIAPCQTLTDQEYQLLREASLRVAEAIGLVGEGNVQLALNPRDSWEYYVIETNPRMSRSSALASKATGYPLAYIAAKLALGYRLDELLNRVTERTCACFEPSLDYVVVKVPRWDLEKFEGVEKSIGSEMKSIGEVMAIGRNFAEALQKAIRMLDIGEPGVVAGPRYEEPESLEEVLGKLRRREPYWPIWAAKAFRLGASVEQVYEATGVDPYFLSQIREIVEVAEKLRRTKPWSSEFLDLLAEAKRLGFSDEQVALLTGTTVEKVEKARRSIGLDRPRVRQIDTLAAEWPAATNYLYMSYNAYEDDEPITTGRPRLIVLGAGVFRIGVSVEFDWGVVSFADEARRLGYEVVIVNYNPETVSTDWDISDKLYFEELTLERVIDIYWFEKPVGVIAFLGGQIANNLAKPLEERGVRLLGTPGRSVDRAENRAWFSQLLEELGIKQPSWTAASSIEEVLKFAESVGYPVLVRPSYVLSGSAMKIAWSPEELKSYIEQAARVSPRYPVVVSKFLEDAVEAEIDAVGDSRRTVGTVIEHVEPGGVHSGDSTMVIPWFSLPETAVREMIRIAETLNEVLEIKGPFNIQFLVKDGSVYVVELNLRASRSMPFTSKVTGYNLMRAAAEAALRGRISYGFNGADGFKLLRPTGWWGVKSPQPSWQRLRGAYPGLGPEMRSTGEVAALGRTLHEALLKSWLSVQGNRIPPAGSIVLIYTPTGRGSSDLSQAAKLMTEKGYTVYTIEGMEVDGAEPLPLEQALRLVRMGGVGLLMTTDYAPQRDYRVRRLAVDLGVPVVLDARLARMLAEAINRVGLENLEALELREYWGPNVEPF.

The interval 1–402 (MPRRIDVRKV…ALQKAIRMLD (402 aa)) is carboxyphosphate synthetic domain. ATP-binding residues include Arg-129, Arg-169, Gly-175, Gly-176, Lys-208, Leu-210, Glu-215, Gly-241, Val-242, His-243, Gln-284, and Glu-299. In terms of domain architecture, ATP-grasp 1 spans 133-328 (RETMMKAGLP…LAYIAAKLAL (196 aa)). Residues Gln-284, Glu-299, and Asn-301 each contribute to the Mg(2+) site. Residues Gln-284, Glu-299, and Asn-301 each coordinate Mn(2+). The tract at residues 403–555 (IGEPGVVAGP…MSYNAYEDDE (153 aa)) is oligomerization domain. Residues 556-944 (PITTGRPRLI…LKSWLSVQGN (389 aa)) are carbamoyl phosphate synthetic domain. Residues 681–871 (SQLLEELGIK…LMRAAAEAAL (191 aa)) enclose the ATP-grasp 2 domain. The ATP site is built by Arg-717, Lys-756, Leu-758, Glu-763, Gly-787, Val-788, His-789, Ser-790, Gln-830, and Glu-842. Residues Gln-830, Glu-842, and Asn-844 each contribute to the Mg(2+) site. Gln-830, Glu-842, and Asn-844 together coordinate Mn(2+). The MGS-like domain occupies 944-1073 (NRIPPAGSIV…EYWGPNVEPF (130 aa)). An allosteric domain region spans residues 945–1073 (RIPPAGSIVL…EYWGPNVEPF (129 aa)).

This sequence belongs to the CarB family. In terms of assembly, composed of two chains; the small (or glutamine) chain promotes the hydrolysis of glutamine to ammonia, which is used by the large (or ammonia) chain to synthesize carbamoyl phosphate. Tetramer of heterodimers (alpha,beta)4. Requires Mg(2+) as cofactor. Mn(2+) serves as cofactor.

The catalysed reaction is hydrogencarbonate + L-glutamine + 2 ATP + H2O = carbamoyl phosphate + L-glutamate + 2 ADP + phosphate + 2 H(+). The enzyme catalyses hydrogencarbonate + NH4(+) + 2 ATP = carbamoyl phosphate + 2 ADP + phosphate + 2 H(+). The protein operates within amino-acid biosynthesis; L-arginine biosynthesis; carbamoyl phosphate from bicarbonate: step 1/1. It participates in pyrimidine metabolism; UMP biosynthesis via de novo pathway; (S)-dihydroorotate from bicarbonate: step 1/3. Large subunit of the glutamine-dependent carbamoyl phosphate synthetase (CPSase). CPSase catalyzes the formation of carbamoyl phosphate from the ammonia moiety of glutamine, carbonate, and phosphate donated by ATP, constituting the first step of 2 biosynthetic pathways, one leading to arginine and/or urea and the other to pyrimidine nucleotides. The large subunit (synthetase) binds the substrates ammonia (free or transferred from glutamine from the small subunit), hydrogencarbonate and ATP and carries out an ATP-coupled ligase reaction, activating hydrogencarbonate by forming carboxy phosphate which reacts with ammonia to form carbamoyl phosphate. The sequence is that of Carbamoyl phosphate synthase large chain from Hyperthermus butylicus (strain DSM 5456 / JCM 9403 / PLM1-5).